Here is a 398-residue protein sequence, read N- to C-terminus: Phosphoglycerate kinase (398 aa).

Residues 21 to 23 (DFN), arginine 36, 59 to 62 (HLGR), arginine 119, and arginine 157 contribute to the substrate site. Residues lysine 208, glycine 296, glutamate 327, and 354–357 (GGDS) contribute to the ATP site.

Belongs to the phosphoglycerate kinase family. As to quaternary structure, monomer.

It localises to the cytoplasm. It carries out the reaction (2R)-3-phosphoglycerate + ATP = (2R)-3-phospho-glyceroyl phosphate + ADP. It participates in carbohydrate degradation; glycolysis; pyruvate from D-glyceraldehyde 3-phosphate: step 2/5. This chain is Phosphoglycerate kinase, found in Streptococcus uberis (strain ATCC BAA-854 / 0140J).